Here is a 234-residue protein sequence, read N- to C-terminus: Peptidase E (234 aa).

Residues Ser120, Asp135, and His157 each act as charge relay system in the active site.

The protein belongs to the peptidase S51 family.

It is found in the cytoplasm. It carries out the reaction Dipeptidase E catalyzes the hydrolysis of dipeptides Asp-|-Xaa. It does not act on peptides with N-terminal Glu, Asn or Gln, nor does it cleave isoaspartyl peptides.. Hydrolyzes dipeptides containing N-terminal aspartate residues. May play a role in allowing the cell to use peptide aspartate to spare carbon otherwise required for the synthesis of the aspartate family of amino acids. In Salmonella gallinarum (strain 287/91 / NCTC 13346), this protein is Peptidase E.